Consider the following 306-residue polypeptide: Small ribosomal subunit biogenesis GTPase RsgA (306 aa).

Positions 77–236 constitute a CP-type G domain; it reads KNELKRPNVA…IVDTPGFSKL (160 aa). GTP-binding positions include 126 to 129 and 179 to 187; these read SKID and GQTGVGKST. Residues cysteine 260, cysteine 266, histidine 268, and cysteine 274 each contribute to the Zn(2+) site.

Belongs to the TRAFAC class YlqF/YawG GTPase family. RsgA subfamily. Monomer. Associates with 30S ribosomal subunit, binds 16S rRNA. Requires Zn(2+) as cofactor.

The protein localises to the cytoplasm. Functionally, one of several proteins that assist in the late maturation steps of the functional core of the 30S ribosomal subunit. Helps release RbfA from mature subunits. May play a role in the assembly of ribosomal proteins into the subunit. Circularly permuted GTPase that catalyzes slow GTP hydrolysis, GTPase activity is stimulated by the 30S ribosomal subunit. This Onion yellows phytoplasma (strain OY-M) protein is Small ribosomal subunit biogenesis GTPase RsgA.